An 87-amino-acid chain; its full sequence is HssA/B-like protein 8 (87 aa).

Polar residues predominate over residues 1–22; it reads MSILSALTSISNPMKSTKSSVA. Positions 1-24 are disordered; that stretch reads MSILSALTSISNPMKSTKSSVANG.

The protein belongs to the hssA/B family.

The chain is HssA/B-like protein 8 (hssl8) from Dictyostelium discoideum (Social amoeba).